The chain runs to 276 residues: Tryptophan synthase alpha chain (276 aa).

Active-site proton acceptor residues include glutamate 46 and glutamate 57.

It belongs to the TrpA family. As to quaternary structure, tetramer of two alpha and two beta chains.

The catalysed reaction is (1S,2R)-1-C-(indol-3-yl)glycerol 3-phosphate + L-serine = D-glyceraldehyde 3-phosphate + L-tryptophan + H2O. The protein operates within amino-acid biosynthesis; L-tryptophan biosynthesis; L-tryptophan from chorismate: step 5/5. Its function is as follows. The alpha subunit is responsible for the aldol cleavage of indoleglycerol phosphate to indole and glyceraldehyde 3-phosphate. This is Tryptophan synthase alpha chain from Halobacterium salinarum (strain ATCC 29341 / DSM 671 / R1).